The sequence spans 339 residues: DNA-directed RNA polymerase subunit alpha (339 aa).

Residues 1–233 (MVREEVAGST…DLFLPFLHAE (233 aa)) are alpha N-terminal domain (alpha-NTD). Positions 266 to 339 (GIPLNCIFID…MDLLKNKLSF (74 aa)) are alpha C-terminal domain (alpha-CTD).

This sequence belongs to the RNA polymerase alpha chain family. In terms of assembly, in plastids the minimal PEP RNA polymerase catalytic core is composed of four subunits: alpha, beta, beta', and beta''. When a (nuclear-encoded) sigma factor is associated with the core the holoenzyme is formed, which can initiate transcription.

The protein resides in the plastid. Its subcellular location is the chloroplast. The enzyme catalyses RNA(n) + a ribonucleoside 5'-triphosphate = RNA(n+1) + diphosphate. Functionally, DNA-dependent RNA polymerase catalyzes the transcription of DNA into RNA using the four ribonucleoside triphosphates as substrates. In Agrostis stolonifera (Creeping bentgrass), this protein is DNA-directed RNA polymerase subunit alpha.